Reading from the N-terminus, the 160-residue chain is SsrA-binding protein (160 aa).

The protein belongs to the SmpB family.

Its subcellular location is the cytoplasm. Required for rescue of stalled ribosomes mediated by trans-translation. Binds to transfer-messenger RNA (tmRNA), required for stable association of tmRNA with ribosomes. tmRNA and SmpB together mimic tRNA shape, replacing the anticodon stem-loop with SmpB. tmRNA is encoded by the ssrA gene; the 2 termini fold to resemble tRNA(Ala) and it encodes a 'tag peptide', a short internal open reading frame. During trans-translation Ala-aminoacylated tmRNA acts like a tRNA, entering the A-site of stalled ribosomes, displacing the stalled mRNA. The ribosome then switches to translate the ORF on the tmRNA; the nascent peptide is terminated with the 'tag peptide' encoded by the tmRNA and targeted for degradation. The ribosome is freed to recommence translation, which seems to be the essential function of trans-translation. The sequence is that of SsrA-binding protein from Pectobacterium atrosepticum (strain SCRI 1043 / ATCC BAA-672) (Erwinia carotovora subsp. atroseptica).